The following is a 689-amino-acid chain: Homoaconitase, mitochondrial (689 aa).

Residues 1-17 (MVVLRRSFHVYTRLQRG) constitute a mitochondrion transit peptide. [4Fe-4S] cluster-binding residues include C336, C403, and C406.

Belongs to the aconitase/IPM isomerase family. [4Fe-4S] cluster is required as a cofactor.

It localises to the mitochondrion. It carries out the reaction (2R,3S)-homoisocitrate = cis-homoaconitate + H2O. It participates in amino-acid biosynthesis; L-lysine biosynthesis via AAA pathway; L-alpha-aminoadipate from 2-oxoglutarate: step 3/5. In terms of biological role, catalyzes the reversible hydration of cis-homoaconitate to (2R,3S)-homoisocitrate, a step in the alpha-aminoadipate pathway for lysine biosynthesis. In Candida glabrata (strain ATCC 2001 / BCRC 20586 / JCM 3761 / NBRC 0622 / NRRL Y-65 / CBS 138) (Yeast), this protein is Homoaconitase, mitochondrial (LYS4).